A 1299-amino-acid polypeptide reads, in one-letter code: DNA-directed RNA polymerase subunit beta' (1299 aa).

Residues cysteine 60, cysteine 62, cysteine 75, and cysteine 78 each contribute to the Zn(2+) site. The Mg(2+) site is built by aspartate 535, aspartate 537, and aspartate 539. Zn(2+) contacts are provided by cysteine 877, cysteine 954, cysteine 961, and cysteine 964.

The protein belongs to the RNA polymerase beta' chain family. As to quaternary structure, the RNAP catalytic core consists of 2 alpha, 1 beta, 1 beta' and 1 omega subunit. When a sigma factor is associated with the core the holoenzyme is formed, which can initiate transcription. Requires Mg(2+) as cofactor. Zn(2+) serves as cofactor.

The catalysed reaction is RNA(n) + a ribonucleoside 5'-triphosphate = RNA(n+1) + diphosphate. DNA-dependent RNA polymerase catalyzes the transcription of DNA into RNA using the four ribonucleoside triphosphates as substrates. This Pseudarthrobacter chlorophenolicus (strain ATCC 700700 / DSM 12829 / CIP 107037 / JCM 12360 / KCTC 9906 / NCIMB 13794 / A6) (Arthrobacter chlorophenolicus) protein is DNA-directed RNA polymerase subunit beta'.